A 151-amino-acid chain; its full sequence is Nucleoside diphosphate kinase (151 aa).

The ATP site is built by Lys10, Phe58, Arg86, Thr92, Arg103, and Asn113. The active-site Pros-phosphohistidine intermediate is the His116.

Belongs to the NDK family. In terms of assembly, homotetramer. Mg(2+) is required as a cofactor.

Its subcellular location is the cytoplasm. The enzyme catalyses dZDP + ATP = dZTP + ADP. The catalysed reaction is a 2'-deoxyribonucleoside 5'-diphosphate + ATP = a 2'-deoxyribonucleoside 5'-triphosphate + ADP. It catalyses the reaction a ribonucleoside 5'-diphosphate + ATP = a ribonucleoside 5'-triphosphate + ADP. The protein operates within purine metabolism. Major role in the synthesis of nucleoside triphosphates other than ATP. The ATP gamma phosphate is transferred to the NDP beta phosphate via a ping-pong mechanism, using a phosphorylated active-site intermediate. Its function is as follows. (Microbial infection) Catalyzes the phosphorylation of dZDP to dZTP, when the bacterium is infected by a phage that produces the substrate for the synthesis of dZTP (2- amino-2'-deoxyadenosine 5'-triphosphate), which is then used by the phage as a DNA polymerase substrate. The protein is Nucleoside diphosphate kinase of Synechococcus sp. (strain CC9605).